Reading from the N-terminus, the 248-residue chain is Exosome complex component Rrp41 (248 aa).

It belongs to the RNase PH family. Rrp41 subfamily. In terms of assembly, component of the archaeal exosome complex. Forms a hexameric ring-like arrangement composed of 3 Rrp41-Rrp42 heterodimers. The hexameric ring associates with a trimer of Rrp4 and/or Csl4 subunits.

The protein localises to the cytoplasm. In terms of biological role, catalytic component of the exosome, which is a complex involved in RNA degradation. Has 3'-&gt;5' exoribonuclease activity. Can also synthesize heteromeric RNA-tails. Binds RNA. The protein is Exosome complex component Rrp41 of Saccharolobus solfataricus (strain ATCC 35092 / DSM 1617 / JCM 11322 / P2) (Sulfolobus solfataricus).